The chain runs to 322 residues: Formimidoylglutamase (322 aa).

Mn(2+) contacts are provided by H127, D163, H165, D167, D254, and D256.

It belongs to the arginase family. It depends on Mn(2+) as a cofactor.

It carries out the reaction N-formimidoyl-L-glutamate + H2O = formamide + L-glutamate. The protein operates within amino-acid degradation; L-histidine degradation into L-glutamate; L-glutamate from N-formimidoyl-L-glutamate (hydrolase route): step 1/1. Catalyzes the conversion of N-formimidoyl-L-glutamate to L-glutamate and formamide. The chain is Formimidoylglutamase from Paraburkholderia xenovorans (strain LB400).